The chain runs to 300 residues: Glutamyl-Q tRNA(Asp) synthetase (300 aa).

Residues 8–12 and Asp-44 each bind L-glutamate; that span reads RFAPT. The short motif at 11-21 is the 'HIGH' region element; sequence PTPSGDLHLGS. Positions 100, 102, 122, and 126 each coordinate Zn(2+). Positions 181 and 199 each coordinate L-glutamate. Positions 237-241 match the 'KMSKS' region motif; the sequence is KLSKQ. Residue Lys-240 coordinates ATP.

Belongs to the class-I aminoacyl-tRNA synthetase family. GluQ subfamily. Zn(2+) serves as cofactor.

Catalyzes the tRNA-independent activation of glutamate in presence of ATP and the subsequent transfer of glutamate onto a tRNA(Asp). Glutamate is transferred on the 2-amino-5-(4,5-dihydroxy-2-cyclopenten-1-yl) moiety of the queuosine in the wobble position of the QUC anticodon. The polypeptide is Glutamyl-Q tRNA(Asp) synthetase (Synechococcus sp. (strain ATCC 27144 / PCC 6301 / SAUG 1402/1) (Anacystis nidulans)).